A 595-amino-acid polypeptide reads, in one-letter code: S-(+)-linalool synthase, chloroplastic (595 aa).

A chloroplast-targeting transit peptide spans Met-1–Arg-46. A compositionally biased stretch (low complexity) spans Ser-27–Ser-40. Positions Ser-27–Pro-54 are disordered. The (2E)-geranyl diphosphate site is built by Arg-309, Asp-346, Asp-350, Arg-487, and Asp-490. Residues Asp-346 and Asp-350 each contribute to the Mg(2+) site. The short motif at Asp-346 to Asp-350 is the DDXXD motif element. Mg(2+) contacts are provided by Asp-490, Ser-494, and Glu-498.

It belongs to the terpene synthase family. Tpsb subfamily. The cofactor is Mg(2+). It depends on Mn(2+) as a cofactor.

The protein localises to the plastid. Its subcellular location is the chloroplast. The enzyme catalyses (2E)-geranyl diphosphate + H2O = (S)-linalool + diphosphate. Its pathway is secondary metabolite biosynthesis; terpenoid biosynthesis. In terms of biological role, involved in monoterpene (C10) biosynthesis. The major product is S-(+)-linalool. Linalool production is induced by jasmonate in response to pathogen attack, it possesses antibacterial activity and is important for resistance to the bacterial blight pathogen Xanthomonas oryzae pv. oryzae (Xoo). Plants over-expressing linalool synthase display enhanced resistance to Xoo. This Oryza sativa subsp. japonica (Rice) protein is S-(+)-linalool synthase, chloroplastic.